Consider the following 473-residue polypeptide: Homeobox protein ATH1 (473 aa).

The segment at 205–221 is SR/KY domain; sequence SKYLHSVQEILSHFAAY. The segment at 266-336 is BELL domain; that stretch reads QRRALEAKKT…NLRERICKKI (71 aa). Residues 372-434 constitute a DNA-binding region (homeobox); it reads IWRPQRGLPE…NARVRLWKPM (63 aa). Residues 448–473 are disordered; it reads NNSHIQPNGPTLRMPKSVMMSQAMHK.

It belongs to the TALE/BELL homeobox family. May form heterodimeric complex with the TALE/KNOX protein STM. Most abundant in flowers.

The protein resides in the nucleus. In terms of biological role, transcription factor which may be involved in the signal transduction pathway downstream of the COP1 gene. Controls floral competency as a specific activator of FLC expression. Is responsive of the nuclear import of SHOOT MERISTEMLESS (STM). The chain is Homeobox protein ATH1 (ATH1) from Arabidopsis thaliana (Mouse-ear cress).